Here is a 361-residue protein sequence, read N- to C-terminus: 3-dehydroquinate synthase (361 aa).

NAD(+) contacts are provided by residues 71-76 (DGEQNK), 105-109 (GVIGD), 129-130 (TT), Lys142, Lys151, and 169-172 (CLNT). Positions 184, 247, and 264 each coordinate Zn(2+).

The protein belongs to the sugar phosphate cyclases superfamily. Dehydroquinate synthase family. Co(2+) serves as cofactor. It depends on Zn(2+) as a cofactor. Requires NAD(+) as cofactor.

It localises to the cytoplasm. The catalysed reaction is 7-phospho-2-dehydro-3-deoxy-D-arabino-heptonate = 3-dehydroquinate + phosphate. It participates in metabolic intermediate biosynthesis; chorismate biosynthesis; chorismate from D-erythrose 4-phosphate and phosphoenolpyruvate: step 2/7. In terms of biological role, catalyzes the conversion of 3-deoxy-D-arabino-heptulosonate 7-phosphate (DAHP) to dehydroquinate (DHQ). This chain is 3-dehydroquinate synthase, found in Sodalis glossinidius (strain morsitans).